A 126-amino-acid chain; its full sequence is Small ribosomal subunit protein uS13 (126 aa).

Residues V98–K126 form a disordered region. The span at A107–K126 shows a compositional bias: basic residues.

The protein belongs to the universal ribosomal protein uS13 family. As to quaternary structure, part of the 30S ribosomal subunit. Forms a loose heterodimer with protein S19. Forms two bridges to the 50S subunit in the 70S ribosome.

In terms of biological role, located at the top of the head of the 30S subunit, it contacts several helices of the 16S rRNA. In the 70S ribosome it contacts the 23S rRNA (bridge B1a) and protein L5 of the 50S subunit (bridge B1b), connecting the 2 subunits; these bridges are implicated in subunit movement. Contacts the tRNAs in the A and P-sites. The polypeptide is Small ribosomal subunit protein uS13 (Amoebophilus asiaticus (strain 5a2)).